Consider the following 244-residue polypeptide: MASIRVADEPAFVLHSIPYKETSLILDVFTRQHGRMALIAKGAKRPHSVLRPVLQRFQPLLVSWSGKSELRTLTKSEWVGGMPSLVGDALLCGFYLNELLVKFLAREDDYERLYDRYSETINALSNLEFESKGLEEILRPFELSLLQETGYAAALDRCVETNDSPVFEALYVYQPERGVRPIQVDDPGHWPVLRGKSLLAIAAGDFSDPETLSESKQLMRFLLGLHLQDQVLTTRQILIDLKKI.

It belongs to the RecO family.

Involved in DNA repair and RecF pathway recombination. This chain is DNA repair protein RecO, found in Polynucleobacter asymbioticus (strain DSM 18221 / CIP 109841 / QLW-P1DMWA-1) (Polynucleobacter necessarius subsp. asymbioticus).